The primary structure comprises 165 residues: Nucleotide-binding protein P9211_04811 (165 aa).

This sequence belongs to the YajQ family.

In terms of biological role, nucleotide-binding protein. This is Nucleotide-binding protein P9211_04811 from Prochlorococcus marinus (strain MIT 9211).